We begin with the raw amino-acid sequence, 280 residues long: Aspartate/glutamate leucyltransferase (280 aa).

This sequence belongs to the R-transferase family. Bpt subfamily.

Its subcellular location is the cytoplasm. It catalyses the reaction N-terminal L-glutamyl-[protein] + L-leucyl-tRNA(Leu) = N-terminal L-leucyl-L-glutamyl-[protein] + tRNA(Leu) + H(+). The enzyme catalyses N-terminal L-aspartyl-[protein] + L-leucyl-tRNA(Leu) = N-terminal L-leucyl-L-aspartyl-[protein] + tRNA(Leu) + H(+). Its function is as follows. Functions in the N-end rule pathway of protein degradation where it conjugates Leu from its aminoacyl-tRNA to the N-termini of proteins containing an N-terminal aspartate or glutamate. The polypeptide is Aspartate/glutamate leucyltransferase (Cereibacter sphaeroides (strain KD131 / KCTC 12085) (Rhodobacter sphaeroides)).